Reading from the N-terminus, the 659-residue chain is Polyamine transporter 4 (659 aa).

Polar residues-rich tracts occupy residues 1–20 and 28–45; these read MPSS…NIQQ and NVTN…TGSI. The segment at 1–81 is disordered; sequence MPSSLTKTES…LDWDGPDDPD (81 aa). Residues 1–99 lie on the Cytoplasmic side of the membrane; it reads MPSSLTKTES…KKWYTTMTSA (99 aa). A helical transmembrane segment spans residues 100-120; that stretch reads FLCLVVTMGSSLYVSSVPELV. Over 121 to 128 the chain is Extracellular; the sequence is ERYHVSQT. A helical membrane pass occupies residues 129-149; the sequence is LALAGLTFYLLGLSTVIGAPL. The Cytoplasmic segment spans residues 150–157; that stretch reads SEVFGRKP. A helical transmembrane segment spans residues 158–178; it reads VYLFSLPVSMLFTMGVGLSNG. Over 179-187 the chain is Extracellular; it reads HMRIILPLR. Residues 188–208 form a helical membrane-spanning segment; it reads FLSGVFASPALSVGSGTILDI. At 209–215 the chain is on the cytoplasmic side; that stretch reads FDVDQVS. A helical membrane pass occupies residues 216-236; it reads VAMTYFVLSPFLGPVLSPIMA. Residues 237–246 lie on the Extracellular side of the membrane; that stretch reads GFATEAKGWR. Residues 247 to 267 form a helical membrane-spanning segment; sequence WSEWIQLIAGGLILPFIALMP. The Cytoplasmic portion of the chain corresponds to 268–316; sequence ETHKGIILRKRAKKRNIALKKFSREAQKEFLKTTVTITILRPLKMLVVE. The chain crosses the membrane as a helical span at residues 317–337; sequence PIVFVFSVYVAFIFAILFGFF. Topologically, residues 338–355 are extracellular; that stretch reads EAYAVIYRGVYHMSMGIS. A helical membrane pass occupies residues 356 to 376; that stretch reads GLPFIGIGVGLWIGAFFYLYI. At 377–423 the chain is on the cytoplasmic side; it reads DRKYLFPKPPAGTQPLTEKERTSKRTTPYRGARDAETGELLPVVPEK. Residues 387–408 are disordered; that stretch reads AGTQPLTEKERTSKRTTPYRGA. A helical membrane pass occupies residues 424–444; it reads FLIACKFGSVALPIGLFWQAW. Residues 445 to 456 are Extracellular-facing; it reads TARSDVHWMAPV. A helical transmembrane segment spans residues 457–477; the sequence is AAGVPFGFGLILIFFSVLMYF. At 478–486 the chain is on the cytoplasmic side; sequence STCYPPLTV. Residues 487–509 traverse the membrane as a helical segment; the sequence is ASCLAANNLLRYVMSSVFPLFTI. Residues 510–518 lie on the Extracellular side of the membrane; that stretch reads QMYTKMKIK. Residues 519–539 form a helical membrane-spanning segment; sequence WASTLFALVCVVMIPIPWVFE. Residues 540–659 lie on the Cytoplasmic side of the membrane; the sequence is KWGSKLRHKS…MATDASARMV (120 aa). The segment covering 587-602 has biased composition (basic and acidic residues); it reads METDPSTREKPGERLS. The interval 587 to 631 is disordered; that stretch reads METDPSTREKPGERLSLRRTHTQPVPASFDREDGQHAQNRNEPIS. 3 positions are modified to phosphothreonine: threonine 589, threonine 606, and threonine 608. A compositionally biased stretch (polar residues) spans 622 to 631; the sequence is HAQNRNEPIS. A phosphoserine mark is found at serine 633 and serine 646.

The protein belongs to the major facilitator superfamily. DHA1 family. Polyamines/proton antiporter (TC 2.A.1.2.16) subfamily.

The protein localises to the cell membrane. Functionally, cell membrane polyamine/proton antiporter, involved in the detoxification of excess polyamines in the cytoplasm. Recognizes spermidine, spermine and the antimalarial drug quinidine, but not quinine, chloroquine and mefloquine. The polypeptide is Polyamine transporter 4 (TPO4) (Saccharomyces cerevisiae (strain ATCC 204508 / S288c) (Baker's yeast)).